Consider the following 299-residue polypeptide: MAVLFLLLLFLCGLPQAETDSIQAIYVVLGEALELPCPSPPALNGDEFLSWFHSPAAGSSTALVAHVQVARPSRDPGKPRRESRLTLLGNYSLWLEGSKAGDAGRYWCALLGQRYRYQNWRVYDVSVLRGSQFSARAADGSSCSVLLCSVVPARSLDSVTWQEGKGPVKGDVQSFWGDGATLLLMCPGEGLPEPRAHKPGIIRCLVPQNKGISFSLAASTDASPALCAPSADWDVAWILTLLLTVGQGFTIVVLGVMLWRQRAQGAQHRNASFPQFKPEIQVYENIHLAHLSPPAPKTR.

An N-terminal signal peptide occupies residues 1-19; sequence MAVLFLLLLFLCGLPQAET. In terms of domain architecture, Ig-like V-type spans 20–124; it reads DSIQAIYVVL…YRYQNWRVYD (105 aa). The Extracellular portion of the chain corresponds to 20-237; it reads DSIQAIYVVL…APSADWDVAW (218 aa). A disulfide bridge connects residues Cys-37 and Cys-108. N-linked (GlcNAc...) asparagine glycosylation is present at Asn-90. The helical transmembrane segment at 238–258 threads the bilayer; the sequence is ILTLLLTVGQGFTIVVLGVML. Topologically, residues 259-299 are cytoplasmic; sequence WRQRAQGAQHRNASFPQFKPEIQVYENIHLAHLSPPAPKTR. Phosphotyrosine is present on Tyr-283.

In terms of assembly, homodimer; disulfide-linked. Interacts with GRB2 and GRB7 in a phosphorylation-dependent manner. Post-translationally, N-glycosylated.

Its subcellular location is the cell membrane. Its function is as follows. May play a role in the downstream signal transduction pathways involving GRB2 and GRB7. The chain is Lymphocyte antigen 6 complex locus protein G6f (LY6G6F) from Bos taurus (Bovine).